Reading from the N-terminus, the 254-residue chain is Type III pantothenate kinase 2 (254 aa).

An ATP-binding site is contributed by 6 to 13; sequence DMGNSHIH. 107 to 110 contacts substrate; sequence GADR. Asp-109 (proton acceptor) is an active-site residue. Asp-130 serves as a coordination point for K(+). ATP is bound at residue Thr-133. Residue Thr-185 participates in substrate binding.

This sequence belongs to the type III pantothenate kinase family. Homodimer. The cofactor is NH4(+). Requires K(+) as cofactor.

Its subcellular location is the cytoplasm. The catalysed reaction is (R)-pantothenate + ATP = (R)-4'-phosphopantothenate + ADP + H(+). It participates in cofactor biosynthesis; coenzyme A biosynthesis; CoA from (R)-pantothenate: step 1/5. Catalyzes the phosphorylation of pantothenate (Pan), the first step in CoA biosynthesis. This chain is Type III pantothenate kinase 2, found in Francisella tularensis subsp. holarctica (strain LVS).